The following is a 255-amino-acid chain: Small ribosomal subunit protein uS2 (255 aa).

Belongs to the universal ribosomal protein uS2 family.

This is Small ribosomal subunit protein uS2 from Streptococcus pyogenes serotype M3 (strain ATCC BAA-595 / MGAS315).